A 460-amino-acid chain; its full sequence is Argininosuccinate lyase (460 aa).

This sequence belongs to the lyase 1 family. Argininosuccinate lyase subfamily.

It localises to the cytoplasm. The catalysed reaction is 2-(N(omega)-L-arginino)succinate = fumarate + L-arginine. It functions in the pathway amino-acid biosynthesis; L-arginine biosynthesis; L-arginine from L-ornithine and carbamoyl phosphate: step 3/3. The polypeptide is Argininosuccinate lyase (Streptococcus mutans serotype c (strain ATCC 700610 / UA159)).